A 550-amino-acid chain; its full sequence is Putative pentatricopeptide repeat-containing protein At5g37570 (550 aa).

PPR repeat units lie at residues 73–107 (GTYL…GLAR), 109–143 (DEYT…GFDK), 144–174 (DVVV…MPER), 175–205 (NAVS…MPER), 206–240 (NLGS…DIIS), 241–267 (YTSM…ARGV), 268–302 (DVRA…NVKP), 303–333 (DEFI…LHQR), 339–369 (SHYV…MPQR), 370–404 (DLVS…GIVP), 405–435 (DEVA…MRKK), and 441–475 (SPDH…AHAS). The type E motif stretch occupies residues 476–550 (AWGSLLGGCS…KICGRSWISR (75 aa)).

This sequence belongs to the PPR family. PCMP-E subfamily.

The protein is Putative pentatricopeptide repeat-containing protein At5g37570 (PCMP-E37) of Arabidopsis thaliana (Mouse-ear cress).